We begin with the raw amino-acid sequence, 150 residues long: Galectin-2 (150 aa).

Residues 9–141 (NQVKLQNDFK…FSSPVTVDVH (133 aa)) form the Galectin domain. A carbohydrate is bound by residues His51, Arg55, Asn64, Glu75, and Arg77.

Homotetramer. Oligomerization is required for carbohydrate binding.

It is found in the secreted. The protein resides in the extracellular space. The protein localises to the extracellular matrix. It localises to the cell wall. Its subcellular location is the endomembrane system. Functionally, binds lactose. May play a role in fruiting body formation. Displays toxicity towards the nematode C.elegans by binding to a specific Gal-beta-1,4-Fuc-alpha-1,6 modification of N-glycan cores on C.elegans intestinal cells. In Coprinopsis cinerea (Inky cap fungus), this protein is Galectin-2 (Cgl2).